Here is a 359-residue protein sequence, read N- to C-terminus: 5-amino-6-(D-ribitylamino)uracil--L-tyrosine 4-hydroxyphenyl transferase (359 aa).

The Radical SAM core domain occupies 45–282 (VTYVVNANIN…VYAISRIFFK (238 aa)). The [4Fe-4S] cluster site is built by C59, C63, and C66.

Belongs to the radical SAM superfamily. CofH family. Consists of two subunits, CofG and CofH. It depends on [4Fe-4S] cluster as a cofactor.

It carries out the reaction 5-amino-6-(D-ribitylamino)uracil + L-tyrosine + S-adenosyl-L-methionine = 5-amino-5-(4-hydroxybenzyl)-6-(D-ribitylimino)-5,6-dihydrouracil + 2-iminoacetate + 5'-deoxyadenosine + L-methionine + H(+). It functions in the pathway cofactor biosynthesis; coenzyme F0 biosynthesis. Functionally, catalyzes the radical-mediated synthesis of 5-amino-5-(4-hydroxybenzyl)-6-(D-ribitylimino)-5,6-dihydrouracil from 5-amino-6-(D-ribitylamino)uracil and L-tyrosine. This is 5-amino-6-(D-ribitylamino)uracil--L-tyrosine 4-hydroxyphenyl transferase from Methanococcus maripaludis (strain C7 / ATCC BAA-1331).